The sequence spans 100 residues: Small ribosomal subunit protein uS14c (100 aa).

This sequence belongs to the universal ribosomal protein uS14 family. Part of the 30S ribosomal subunit.

It localises to the plastid. Functionally, binds 16S rRNA, required for the assembly of 30S particles. This Cuscuta obtusiflora (Peruvian dodder) protein is Small ribosomal subunit protein uS14c.